The chain runs to 630 residues: tRNA uridine 5-carboxymethylaminomethyl modification enzyme MnmG (630 aa).

Residue 13–18 (GGGHAG) coordinates FAD. NAD(+) is bound at residue 273–287 (GPRYCPSIEDKIHRF).

The protein belongs to the MnmG family. Homodimer. Heterotetramer of two MnmE and two MnmG subunits. It depends on FAD as a cofactor.

It is found in the cytoplasm. NAD-binding protein involved in the addition of a carboxymethylaminomethyl (cmnm) group at the wobble position (U34) of certain tRNAs, forming tRNA-cmnm(5)s(2)U34. The chain is tRNA uridine 5-carboxymethylaminomethyl modification enzyme MnmG from Pseudomonas aeruginosa (strain ATCC 15692 / DSM 22644 / CIP 104116 / JCM 14847 / LMG 12228 / 1C / PRS 101 / PAO1).